Consider the following 173-residue polypeptide: Mesencephalic astrocyte-derived neurotrophic factor homolog (173 aa).

An N-terminal signal peptide occupies residues 1–22; the sequence is MNTSHIVLMICFIVGVGQTALA. Intrachain disulfides connect cysteine 28/cysteine 114, cysteine 31/cysteine 103, cysteine 61/cysteine 72, and cysteine 148/cysteine 151.

This sequence belongs to the ARMET family.

It is found in the secreted. Its function is as follows. Required during the maturation of the embryonic nervous system for maintenance of neuronal and cuticular connectivity. Essential for maintenance of dopaminergic neurons and dopamine levels. This Drosophila virilis (Fruit fly) protein is Mesencephalic astrocyte-derived neurotrophic factor homolog.